Reading from the N-terminus, the 118-residue chain is Large ribosomal subunit protein bL20 (118 aa).

It belongs to the bacterial ribosomal protein bL20 family.

Binds directly to 23S ribosomal RNA and is necessary for the in vitro assembly process of the 50S ribosomal subunit. It is not involved in the protein synthesizing functions of that subunit. This is Large ribosomal subunit protein bL20 from Staphylococcus haemolyticus (strain JCSC1435).